The sequence spans 274 residues: NADPH-dependent 7-cyano-7-deazaguanine reductase (274 aa).

Residue 80–82 (VES) participates in substrate binding. 82–83 (SK) contributes to the NADPH binding site. Cysteine 181 acts as the Thioimide intermediate in catalysis. Aspartate 188 (proton donor) is an active-site residue. Residue 220 to 221 (HE) coordinates substrate. 249 to 250 (RG) lines the NADPH pocket.

The protein belongs to the GTP cyclohydrolase I family. QueF type 2 subfamily. In terms of assembly, homodimer.

The protein localises to the cytoplasm. It carries out the reaction 7-aminomethyl-7-carbaguanine + 2 NADP(+) = 7-cyano-7-deazaguanine + 2 NADPH + 3 H(+). It participates in tRNA modification; tRNA-queuosine biosynthesis. In terms of biological role, catalyzes the NADPH-dependent reduction of 7-cyano-7-deazaguanine (preQ0) to 7-aminomethyl-7-deazaguanine (preQ1). The protein is NADPH-dependent 7-cyano-7-deazaguanine reductase of Burkholderia pseudomallei (strain 1106a).